Here is a 256-residue protein sequence, read N- to C-terminus: UPF0246 protein Sbal_1048 (256 aa).

The protein belongs to the UPF0246 family.

In Shewanella baltica (strain OS155 / ATCC BAA-1091), this protein is UPF0246 protein Sbal_1048.